Here is a 335-residue protein sequence, read N- to C-terminus: Selenide, water dikinase (335 aa).

Selenocysteine 7 is an active-site residue. Position 7 (selenocysteine 7) is a non-standard amino acid, selenocysteine. ATP contacts are provided by residues lysine 10 and 36–38 (LGD). Aspartate 39 lines the Mg(2+) pocket. ATP-binding positions include aspartate 55, aspartate 78, and 126 to 128 (GHT). Residue aspartate 78 coordinates Mg(2+). Aspartate 232 contacts Mg(2+).

The protein belongs to the selenophosphate synthase 1 family. Class I subfamily. In terms of assembly, homodimer. It depends on Mg(2+) as a cofactor.

It carries out the reaction hydrogenselenide + ATP + H2O = selenophosphate + AMP + phosphate + 2 H(+). Its function is as follows. Synthesizes selenophosphate from selenide and ATP. The sequence is that of Selenide, water dikinase from Methanococcus maripaludis (strain DSM 14266 / JCM 13030 / NBRC 101832 / S2 / LL).